A 579-amino-acid polypeptide reads, in one-letter code: MTMAISSALPSPLLLAASLLLLIVQAQGITRHYEFNVQMANATRLCNTKSMVTVNGQCPGPELVAREGDRVVIRVTNNVAHNISLHWHGVRQVRTGWADGPAYITQCPIQTGQSYVYNFTVAGQRGTLWWHAHISWLRATVYGALVILPKLGVPYPFPAPHKEVPVIFGEWWNADTEEVVNQAVQTGGGPNVSDAFTINGLPGPLYNCSAQDTFKLKVKPGKTYMLRLINAALNEELFFAVANHTLTVVEVDAVYVKPFTVDTLVISPGQTTNVLLTAKPYYPGANFYMSAAPYSTARPGTFGNTTVAGILEYENPAMSPSAASFVKGLPLFKPTLPQLNDTDFVTNFTDKLRSLATPEYPAAVPQSVDKRFFFTVGLGTLPCPANMTCQGPNNTQMAASMNNVSFVLPARALLQSHFTGLSSGVYAPDFPVAPLSPFNYTGTPPNNTNVKTGTKLLVLRYNTSVELVMQDTSILGIESHPLHLHGFNFFVIGQGFGNYDAVNDPAKFNLVDPVERNTVGVPAGGWVAIRFLADNPGVWFMHCHLEAHTTWGLRMAWLVLDGSHPNQKLLPPPSDLPKC.

The first 28 residues, 1–28, serve as a signal peptide directing secretion; sequence MTMAISSALPSPLLLAASLLLLIVQAQG. 2 Plastocyanin-like domains span residues 36-152 and 162-316; these read NVQM…PKLG and KEVP…YENP. Asn41 and Asn82 each carry an N-linked (GlcNAc...) asparagine glycan. Positions 86 and 88 each coordinate Cu cation. Asn118 is a glycosylation site (N-linked (GlcNAc...) asparagine). Cu cation is bound by residues His131 and His133. 12 N-linked (GlcNAc...) asparagine glycosylation sites follow: Asn191, Asn207, Asn243, Asn304, Asn340, Asn347, Asn386, Asn393, Asn403, Asn439, Asn446, and Asn462. Residues 429-563 enclose the Plastocyanin-like 3 domain; the sequence is DFPVAPLSPF…RMAWLVLDGS (135 aa). Cu cation is bound by residues His480, His483, His485, His542, Cys543, His544, and His548.

This sequence belongs to the multicopper oxidase family. Cu cation is required as a cofactor.

Its subcellular location is the secreted. The protein resides in the extracellular space. It localises to the apoplast. The catalysed reaction is 4 hydroquinone + O2 = 4 benzosemiquinone + 2 H2O. In terms of biological role, lignin degradation and detoxification of lignin-derived products. This is Laccase-4 (LAC4) from Oryza sativa subsp. japonica (Rice).